Consider the following 263-residue polypeptide: Inner membrane protein YpjD (263 aa).

Residues 1 to 3 (MPV) are Periplasmic-facing. The helical transmembrane segment at 4–23 (FALLALVAYSVSLALIVPGL) threads the bilayer. At 24–34 (LQKNGGWRRMA) the chain is on the cytoplasmic side. Residues 35–54 (IISAVIALVCHAIALEARIL) form a helical membrane-spanning segment. At 55–63 (PDGDSGQNL) the chain is on the periplasmic side. The helical transmembrane segment at 64–83 (SLLNVGSLVSLMICTVMTIV) threads the bilayer. Residues 84-89 (ASRNRG) lie on the Cytoplasmic side of the membrane. Residues 90-109 (WLLLPIVYAFALINLALATF) form a helical membrane-spanning segment. Residues 110–123 (MPNEYITHLEATPG) lie on the Periplasmic side of the membrane. Residues 124-146 (MLVHIGLSLFSYATLIIAALYAL) traverse the membrane as a helical segment. The Cytoplasmic segment spans residues 147–181 (QLAWIDYQLKNKKLAFNQEMPPLMSIERKMFHITQ). Residues 182 to 201 (IGVVLLTLTLCTGLFYMHNL) form a helical membrane-spanning segment. Over 202–210 (FSMENIDKA) the chain is Periplasmic. Residues 211-228 (VLSIVAWFVYIVLLWGHY) traverse the membrane as a helical segment. Residues 229–236 (HEGWRGRR) lie on the Cytoplasmic side of the membrane. A helical transmembrane segment spans residues 237 to 259 (VVWFNVAGAVILTLAYFGSRIVQ). Topologically, residues 260 to 263 (QLIS) are periplasmic.

The protein localises to the cell inner membrane. This Escherichia coli O157:H7 protein is Inner membrane protein YpjD (ypjD).